A 429-amino-acid chain; its full sequence is Light-independent protochlorophyllide reductase subunit N (429 aa).

[4Fe-4S] cluster-binding residues include Cys-32, Cys-57, and Cys-118.

It belongs to the BchN/ChlN family. Protochlorophyllide reductase is composed of three subunits; BchL, BchN and BchB. Forms a heterotetramer of two BchB and two BchN subunits. [4Fe-4S] cluster serves as cofactor.

The catalysed reaction is chlorophyllide a + oxidized 2[4Fe-4S]-[ferredoxin] + 2 ADP + 2 phosphate = protochlorophyllide a + reduced 2[4Fe-4S]-[ferredoxin] + 2 ATP + 2 H2O. It participates in porphyrin-containing compound metabolism; bacteriochlorophyll biosynthesis (light-independent). Functionally, component of the dark-operative protochlorophyllide reductase (DPOR) that uses Mg-ATP and reduced ferredoxin to reduce ring D of protochlorophyllide (Pchlide) to form chlorophyllide a (Chlide). This reaction is light-independent. The NB-protein (BchN-BchB) is the catalytic component of the complex. This Rhodopseudomonas palustris (strain TIE-1) protein is Light-independent protochlorophyllide reductase subunit N.